Reading from the N-terminus, the 482-residue chain is Guanine nucleotide exchange factor SRM1 (482 aa).

The segment covering 1–11 (MVKRTVATNGD) has biased composition (polar residues). A disordered region spans residues 1-22 (MVKRTVATNGDASGAHRAKKMS). The Nuclear localization signal motif lies at 15 to 26 (AHRAKKMSKTHA). RCC1 repeat units follow at residues 45-101 (PLDI…ALDE), 103-152 (SNVW…TPAK), 183-238 (NGEV…FLDE), 239-291 (EGMV…ALTK), 292-347 (DNKL…ILSQ), 349-411 (GDLY…AVAQ), and 412-466 (NGIA…SGGV). The tract at residues 128 to 158 (KDMDADDSSDDEDGDLNELESTPAKIPRESF) is disordered. Acidic residues predominate over residues 131-145 (DADDSSDDEDGDLNE). 2 positions are modified to phosphoserine: serine 135 and serine 136.

Component of a multicomponent complex composed of six to seven proteins, which has a collective molecular mass greater than 150 kDa. Interacts with GSP1 and YRB2. Phosphorylated; possibly by KSP1.

It localises to the nucleus. In terms of biological role, guanine nucleotide exchange factor that promotes the exchange of GSP1/GSP2-bound GDP by GTP and controls RNA metabolism and transport. Involved in yeast pheromone response pathway and in mRNA metabolism. Involved in nuclear pore complex (NPC) assembly and required for mRNA and ribosome nuclear export. Binds chromatin and is involved NPC-mediated transcriptional control. This chain is Guanine nucleotide exchange factor SRM1 (SRM1), found in Saccharomyces cerevisiae (strain ATCC 204508 / S288c) (Baker's yeast).